A 419-amino-acid chain; its full sequence is L-rhamnose isomerase (419 aa).

Mn(2+) is bound by residues histidine 262, aspartate 294, and aspartate 296.

Belongs to the rhamnose isomerase family. In terms of assembly, homotetramer. Requires Mn(2+) as cofactor.

The protein resides in the cytoplasm. It catalyses the reaction L-rhamnopyranose = L-rhamnulose. It participates in carbohydrate degradation; L-rhamnose degradation; glycerone phosphate from L-rhamnose: step 1/3. Catalyzes the interconversion of L-rhamnose and L-rhamnulose. The polypeptide is L-rhamnose isomerase (Shigella flexneri serotype 5b (strain 8401)).